We begin with the raw amino-acid sequence, 597 residues long: Aspartate--tRNA ligase (597 aa).

Residue glutamate 180 coordinates L-aspartate. The interval 204 to 207 (QLFK) is aspartate. Arginine 226 is an L-aspartate binding site. ATP is bound by residues 226-228 (RDE) and glutamine 235. Residue histidine 454 coordinates L-aspartate. Glutamate 488 provides a ligand contact to ATP. Arginine 495 serves as a coordination point for L-aspartate. Residue 540 to 543 (GLDR) participates in ATP binding.

This sequence belongs to the class-II aminoacyl-tRNA synthetase family. Type 1 subfamily. Homodimer.

It localises to the cytoplasm. The catalysed reaction is tRNA(Asp) + L-aspartate + ATP = L-aspartyl-tRNA(Asp) + AMP + diphosphate. Functionally, catalyzes the attachment of L-aspartate to tRNA(Asp) in a two-step reaction: L-aspartate is first activated by ATP to form Asp-AMP and then transferred to the acceptor end of tRNA(Asp). The sequence is that of Aspartate--tRNA ligase from Clostridium perfringens (strain ATCC 13124 / DSM 756 / JCM 1290 / NCIMB 6125 / NCTC 8237 / Type A).